The chain runs to 280 residues: Shikimate dehydrogenase (NADP(+)) (280 aa).

Residues 15–17 (SLS) and Thr62 contribute to the shikimate site. Lys66 serves as the catalytic Proton acceptor. Positions 88 and 104 each coordinate shikimate. NADP(+) is bound by residues 128–132 (GAGGA), 151–156 (NRTEGR), and Ile222. Position 224 (Tyr224) interacts with shikimate. Gly245 lines the NADP(+) pocket.

This sequence belongs to the shikimate dehydrogenase family. In terms of assembly, homodimer.

The enzyme catalyses shikimate + NADP(+) = 3-dehydroshikimate + NADPH + H(+). It functions in the pathway metabolic intermediate biosynthesis; chorismate biosynthesis; chorismate from D-erythrose 4-phosphate and phosphoenolpyruvate: step 4/7. Its function is as follows. Involved in the biosynthesis of the chorismate, which leads to the biosynthesis of aromatic amino acids. Catalyzes the reversible NADPH linked reduction of 3-dehydroshikimate (DHSA) to yield shikimate (SA). This chain is Shikimate dehydrogenase (NADP(+)), found in Methanosarcina barkeri (strain Fusaro / DSM 804).